The sequence spans 313 residues: Ribosomal RNA small subunit methyltransferase H (313 aa).

S-adenosyl-L-methionine contacts are provided by residues 35 to 37 (GGH), Asp-55, Phe-79, Asp-101, and Gln-108.

This sequence belongs to the methyltransferase superfamily. RsmH family.

It localises to the cytoplasm. It catalyses the reaction cytidine(1402) in 16S rRNA + S-adenosyl-L-methionine = N(4)-methylcytidine(1402) in 16S rRNA + S-adenosyl-L-homocysteine + H(+). Functionally, specifically methylates the N4 position of cytidine in position 1402 (C1402) of 16S rRNA. The chain is Ribosomal RNA small subunit methyltransferase H from Escherichia coli O81 (strain ED1a).